A 217-amino-acid chain; its full sequence is Adapter protein MecA (217 aa).

It belongs to the MecA family. As to quaternary structure, homodimer.

Its function is as follows. Enables the recognition and targeting of unfolded and aggregated proteins to the ClpC protease or to other proteins involved in proteolysis. This is Adapter protein MecA from Listeria monocytogenes serotype 4b (strain CLIP80459).